The chain runs to 290 residues: Inorganic pyrophosphatase (290 aa).

Position 81 (arginine 81) interacts with diphosphate. Aspartate 118, aspartate 123, and aspartate 155 together coordinate Mg(2+).

This sequence belongs to the PPase family. Requires Mg(2+) as cofactor.

The protein resides in the cytoplasm. It catalyses the reaction diphosphate + H2O = 2 phosphate + H(+). In Neurospora crassa (strain ATCC 24698 / 74-OR23-1A / CBS 708.71 / DSM 1257 / FGSC 987), this protein is Inorganic pyrophosphatase (ipp-1).